The sequence spans 246 residues: UDP-N-acetyl-D-mannosaminuronic acid transferase (246 aa).

It belongs to the glycosyltransferase 26 family.

The enzyme catalyses UDP-N-acetyl-alpha-D-mannosaminouronate + N-acetyl-alpha-D-glucosaminyl-di-trans,octa-cis-undecaprenyl diphosphate = beta-D-ManNAcA-(1-&gt;4)-alpha-D-GlcNAc-di-trans,octa-cis-undecaprenyl diphosphate + UDP + H(+). It functions in the pathway bacterial outer membrane biogenesis; enterobacterial common antigen biosynthesis. Catalyzes the synthesis of Und-PP-GlcNAc-ManNAcA (Lipid II), the second lipid-linked intermediate involved in enterobacterial common antigen (ECA) synthesis. The protein is UDP-N-acetyl-D-mannosaminuronic acid transferase of Salmonella schwarzengrund (strain CVM19633).